Here is a 33-residue protein sequence, read N- to C-terminus: Imperacalcin (33 aa).

3 cysteine pairs are disulfide-bonded: Cys-3–Cys-17, Cys-10–Cys-21, and Cys-16–Cys-32. Important for stimulation of [3H]ryanodine binding to RYR1 stretches follow at residues 8–9 (KR) and 19–20 (KK). The interval 22–24 (KRR) is essential for stimulation of [3H]ryanodine binding to RYR1. Residues 25-27 (GTN) are important for stimulation of [3H]ryanodine binding to RYR1.

The protein belongs to the scorpion calcin family. In terms of tissue distribution, expressed by the venom gland.

The protein localises to the secreted. Functionally, this toxin affects the activity of ryanodine receptors 1, 2 and 3 (RyR1, RyR2 and RyR3). At lower concentrations the toxin increases full openings of the RyRs, and at higher concentrations it inhibits full openings and induces openings to subconductance levels (30% of the full conductance state) and reduces the number of full conductance openings. The different actions may be attributed to the toxins binding at different sites on the RyRs, with binding at a high-affinity site mediating the increase in full openings and the induction of subconductance states evoked upon binding to a lower-affinity site. Furthermore, it triggers calcium release from sarcoplasmic vesicles (11.7 nM are enough to induce a sharp release, and 70% of the total calcium is released after toxin (100 nM) addition) probably by acting as a cell-penetrating peptide (CPP). In addition, it has been shown to dose-dependently stimulate ryanodine binding to RyR1 (EC(50)=8.7 nM). It also augments the bell-shaped calcium-[3H]ryanodine binding curve that is maximal at about 10 uM calcium concentration. It binds a different site as ryanodine. It acts synergistically with caffeine. In vivo, intracerebroventricular injection into mice induces neurotoxic symptoms, followed by death. This Pandinus imperator (Emperor scorpion) protein is Imperacalcin.